Reading from the N-terminus, the 955-residue chain is Anoctamin-4 (955 aa).

At 1-352 the chain is on the extracellular side; sequence MEASSSGITN…FGEKIGLYFA (352 aa). Residues 72-100 form a disordered region; sequence CKDDDSLLHPGNLTSTSDDASRLEAGGET. N83, N105, N257, and N288 each carry an N-linked (GlcNAc...) asparagine glycan. A helical transmembrane segment spans residues 353 to 373; sequence WLGWYTGMLFPAAFIGLFVFL. Residues 374–424 are Cytoplasmic-facing; the sequence is YGVTTLDHSQVSKEVCQATDIIMCPVCDKYCPFMRLSDSCVYAKVTHLFDN. Residues 425–445 traverse the membrane as a helical segment; the sequence is GATVFFAVFMAVWATVFLEFW. Residues 446–505 lie on the Extracellular side of the membrane; sequence KRRRAVIAYDWDLIDWEEEEEEIRPQFEAKYSKKERMNPISGKPEPYQAFTDKCSRLIVS. A helical membrane pass occupies residues 506–526; sequence ASGIFFMICVVIAAVFGIVIY. The Cytoplasmic segment spans residues 527 to 547; the sequence is RVVTVSTFAAFKWALIRNNSQ. Residues 548–568 traverse the membrane as a helical segment; it reads VATTGTAVCINFCIIMLLNVL. At 569 to 595 the chain is on the extracellular side; it reads YEKVALLLTNLEQPRTESEWENSFTLK. A helical membrane pass occupies residues 596–616; sequence MFLFQFVNLNSSTFYIAFFLG. The Cytoplasmic portion of the chain corresponds to 617–715; the sequence is RFTGHPGAYL…AYGLFDEYLE (99 aa). A helical transmembrane segment spans residues 716 to 736; the sequence is MILQFGFTTIFVAAFPLAPLL. Over 737–768 the chain is Extracellular; sequence ALLNNIIEIRLDAYKFVTQWRRPLASRAKDIG. Residues 769 to 789 traverse the membrane as a helical segment; the sequence is IWYGILEGIGILSVITNAFVI. At 790-885 the chain is on the cytoplasmic side; it reads AITSDFIPRL…QFWHVLAARL (96 aa). The chain crosses the membrane as a helical span at residues 886 to 906; sequence AFIIVFEHLVFCIKHLISYLI. The Extracellular portion of the chain corresponds to 907–955; sequence PDLPKDLRDRMRREKYLIQEMMYEAELERLQKERKERKKNGKAHHNEWP.

It belongs to the anoctamin family.

It localises to the cell membrane. It catalyses the reaction a 1,2-diacyl-sn-glycero-3-phospho-L-serine(in) = a 1,2-diacyl-sn-glycero-3-phospho-L-serine(out). It carries out the reaction a beta-D-galactosyl-(1&lt;-&gt;1')-N-acylsphing-4-enine(out) = a beta-D-galactosyl-(1&lt;-&gt;1')-N-acylsphing-4-enine(in). The enzyme catalyses a 1,2-diacyl-sn-glycero-3-phosphocholine(in) = a 1,2-diacyl-sn-glycero-3-phosphocholine(out). In terms of biological role, has calcium-dependent phospholipid scramblase activity; scrambles phosphatidylserine, phosphatidylcholine and galactosylceramide. Does not exhibit calcium-activated chloride channel (CaCC) activity. In Homo sapiens (Human), this protein is Anoctamin-4 (ANO4).